Here is a 487-residue protein sequence, read N- to C-terminus: Zinc finger protein 345 (487 aa).

15 C2H2-type zinc fingers span residues Leu62 to His84, Tyr90 to His112, Tyr118 to His140, Tyr146 to His168, Tyr174 to His196, Tyr202 to His224, Tyr230 to His252, Tyr258 to His280, Tyr286 to His308, Tyr314 to His336, Tyr342 to His364, Tyr370 to His392, Tyr398 to His420, Tyr426 to His448, and Tyr454 to His476.

Belongs to the krueppel C2H2-type zinc-finger protein family.

It localises to the nucleus. May be involved in transcriptional regulation. This Bos taurus (Bovine) protein is Zinc finger protein 345 (ZNF345).